A 277-amino-acid polypeptide reads, in one-letter code: Tryptophan synthase alpha chain (277 aa).

Catalysis depends on proton acceptor residues E43 and E54.

The protein belongs to the TrpA family. As to quaternary structure, tetramer of two alpha and two beta chains.

It catalyses the reaction (1S,2R)-1-C-(indol-3-yl)glycerol 3-phosphate + L-serine = D-glyceraldehyde 3-phosphate + L-tryptophan + H2O. Its pathway is amino-acid biosynthesis; L-tryptophan biosynthesis; L-tryptophan from chorismate: step 5/5. Functionally, the alpha subunit is responsible for the aldol cleavage of indoleglycerol phosphate to indole and glyceraldehyde 3-phosphate. The chain is Tryptophan synthase alpha chain from Haloferax volcanii (strain ATCC 29605 / DSM 3757 / JCM 8879 / NBRC 14742 / NCIMB 2012 / VKM B-1768 / DS2) (Halobacterium volcanii).